Here is a 105-residue protein sequence, read N- to C-terminus: Phosphoribosyl-AMP cyclohydrolase (105 aa).

A Mg(2+)-binding site is contributed by aspartate 72. Cysteine 73 serves as a coordination point for Zn(2+). Residues aspartate 74 and aspartate 76 each contribute to the Mg(2+) site. Zn(2+) contacts are provided by cysteine 89 and cysteine 96.

Belongs to the PRA-CH family. Homodimer. It depends on Mg(2+) as a cofactor. Zn(2+) serves as cofactor.

It is found in the cytoplasm. The enzyme catalyses 1-(5-phospho-beta-D-ribosyl)-5'-AMP + H2O = 1-(5-phospho-beta-D-ribosyl)-5-[(5-phospho-beta-D-ribosylamino)methylideneamino]imidazole-4-carboxamide. It functions in the pathway amino-acid biosynthesis; L-histidine biosynthesis; L-histidine from 5-phospho-alpha-D-ribose 1-diphosphate: step 3/9. Its function is as follows. Catalyzes the hydrolysis of the adenine ring of phosphoribosyl-AMP. This Listeria innocua serovar 6a (strain ATCC BAA-680 / CLIP 11262) protein is Phosphoribosyl-AMP cyclohydrolase.